The following is a 102-amino-acid chain: Monothiol glutaredoxin-S9 (102 aa).

Residues M1 to L101 form the Glutaredoxin domain. C21 is a binding site for [2Fe-2S] cluster.

This sequence belongs to the glutaredoxin family. CC-type subfamily.

The protein resides in the cytoplasm. Its function is as follows. May only reduce GSH-thiol disulfides, but not protein disulfides. In Arabidopsis thaliana (Mouse-ear cress), this protein is Monothiol glutaredoxin-S9 (GRXS9).